A 273-amino-acid polypeptide reads, in one-letter code: Imidazole glycerol phosphate synthase subunit HisF (273 aa).

Catalysis depends on residues D11 and D134.

It belongs to the HisA/HisF family. As to quaternary structure, heterodimer of HisH and HisF.

The protein localises to the cytoplasm. The catalysed reaction is 5-[(5-phospho-1-deoxy-D-ribulos-1-ylimino)methylamino]-1-(5-phospho-beta-D-ribosyl)imidazole-4-carboxamide + L-glutamine = D-erythro-1-(imidazol-4-yl)glycerol 3-phosphate + 5-amino-1-(5-phospho-beta-D-ribosyl)imidazole-4-carboxamide + L-glutamate + H(+). It participates in amino-acid biosynthesis; L-histidine biosynthesis; L-histidine from 5-phospho-alpha-D-ribose 1-diphosphate: step 5/9. Functionally, IGPS catalyzes the conversion of PRFAR and glutamine to IGP, AICAR and glutamate. The HisF subunit catalyzes the cyclization activity that produces IGP and AICAR from PRFAR using the ammonia provided by the HisH subunit. This is Imidazole glycerol phosphate synthase subunit HisF from Methanosarcina acetivorans (strain ATCC 35395 / DSM 2834 / JCM 12185 / C2A).